A 689-amino-acid polypeptide reads, in one-letter code: Methionine--tRNA ligase (689 aa).

Positions proline 15–histidine 25 match the 'HIGH' region motif. Zn(2+) contacts are provided by cysteine 146, cysteine 149, cysteine 159, and cysteine 162. Positions lysine 332–serine 336 match the 'KMSKS' region motif. Lysine 335 lines the ATP pocket. One can recognise a tRNA-binding domain in the interval aspartate 588–lysine 689.

The protein belongs to the class-I aminoacyl-tRNA synthetase family. MetG type 1 subfamily. Homodimer. The cofactor is Zn(2+).

Its subcellular location is the cytoplasm. The catalysed reaction is tRNA(Met) + L-methionine + ATP = L-methionyl-tRNA(Met) + AMP + diphosphate. Is required not only for elongation of protein synthesis but also for the initiation of all mRNA translation through initiator tRNA(fMet) aminoacylation. The protein is Methionine--tRNA ligase of Shewanella sp. (strain W3-18-1).